The primary structure comprises 309 residues: MPIRVQDELPAVSFLRNENVFVMTTTRATTQEIRPLKVLILNLMPKKIETENQFLRLLSNSPLQVDIQLLRIDARESRNTPAEHLNNFYCNFDEICDQNFDGLIVTGAPLGLVEFNDVAYWPQIKQVLEWAKDHVTSTLFVCWAVQAALNILYGIPKQTRAEKISGVYEHHILHPHALLTRGFDDSFLAPHSRYADFPAGLIRDYTDLEILAETEEGDAYLFASKDKRIAFVTGHPEYDANTLASEYFRDVEAGLNPEVPYNYFPQNDPQNKPRATWRSHGNLLFANWLNYYVYQITPYDLRHMNPTLE.

Cys-142 acts as the Acyl-thioester intermediate in catalysis. The substrate site is built by Lys-163 and Ser-192. The active-site Proton acceptor is the His-235. The active site involves Glu-237. Arg-249 serves as a coordination point for substrate.

Belongs to the MetA family.

Its subcellular location is the cytoplasm. It carries out the reaction L-homoserine + succinyl-CoA = O-succinyl-L-homoserine + CoA. Its pathway is amino-acid biosynthesis; L-methionine biosynthesis via de novo pathway; O-succinyl-L-homoserine from L-homoserine: step 1/1. Functionally, transfers a succinyl group from succinyl-CoA to L-homoserine, forming succinyl-L-homoserine. The sequence is that of Homoserine O-succinyltransferase from Klebsiella pneumoniae (strain 342).